We begin with the raw amino-acid sequence, 262 residues long: Type III pantothenate kinase (262 aa).

12 to 19 (DIGNTSIA) lines the ATP pocket. Substrate contacts are provided by residues Tyr-94 and 109–112 (GSDV). Catalysis depends on Asp-111, which acts as the Proton acceptor. Position 132 (Asp-132) interacts with K(+). Residue Thr-135 coordinates ATP. Thr-187 contacts substrate.

Belongs to the type III pantothenate kinase family. In terms of assembly, homodimer. NH4(+) is required as a cofactor. Requires K(+) as cofactor.

Its subcellular location is the cytoplasm. The catalysed reaction is (R)-pantothenate + ATP = (R)-4'-phosphopantothenate + ADP + H(+). It functions in the pathway cofactor biosynthesis; coenzyme A biosynthesis; CoA from (R)-pantothenate: step 1/5. Functionally, catalyzes the phosphorylation of pantothenate (Pan), the first step in CoA biosynthesis. The chain is Type III pantothenate kinase from Borreliella burgdorferi (strain ATCC 35210 / DSM 4680 / CIP 102532 / B31) (Borrelia burgdorferi).